The following is an 883-amino-acid chain: Brevican core protein (883 aa).

An N-terminal signal peptide occupies residues 1–22 (MIPLLLSLLAALVLTQAPAALA). The Ig-like V-type domain occupies 35-154 (FRVRIGATQL…SSDAVEVKVK (120 aa)). 5 disulfide bridges follow: cysteine 56–cysteine 136, cysteine 178–cysteine 249, cysteine 202–cysteine 223, cysteine 276–cysteine 351, and cysteine 300–cysteine 321. Asparagine 129 carries an N-linked (GlcNAc...) asparagine glycan. Link domains follow at residues 156–251 (VVFL…YCYA) and 256–353 (GELF…YCFR). Phosphoserine is present on serine 224. The N-linked (GlcNAc...) asparagine glycan is linked to asparagine 336. The segment at 402-592 (SIPISEDGGG…LETPSEEKSG (191 aa)) is disordered. Serine 413 is subject to Phosphoserine. Serine 413 carries O-linked (Xyl...) (chondroitin sulfate) serine glycosylation. Composition is skewed to acidic residues over residues 440–451 (SSEEEGVALEEE) and 459–468 (ALEEEKEQED). The segment covering 479 to 495 (PLPTGSETEHSLSQVSP) has biased composition (polar residues). Positions 581–592 (RELETPSEEKSG) are enriched in basic and acidic residues. The 37-residue stretch at 622–658 (SSGDCIPSPCHNGGTCLEEKEGFRCLCLPGYGGDLCD) folds into the EGF-like domain. Cystine bridges form between cysteine 626–cysteine 637, cysteine 631–cysteine 646, cysteine 648–cysteine 657, cysteine 664–cysteine 675, cysteine 692–cysteine 784, cysteine 760–cysteine 776, cysteine 791–cysteine 834, and cysteine 820–cysteine 847. The region spanning 658-786 (DVGLHFCSPG…NYHLSYTCKM (129 aa)) is the C-type lectin domain. Residues 789-849 (VSCGPPPQLP…WEAPQISCVP (61 aa)) enclose the Sushi domain. Positions 854–883 (RALRSMDAPEGPRGQLSRHRKAPLTPPSSL) are disordered.

The protein belongs to the aggrecan/versican proteoglycan family. As to quaternary structure, interacts with TNR. In terms of processing, O-glycosylated; contains chondroitin sulfate. Expressed in the retina, specifically around the inner and outer segments of photoreceptors, retinal pigment epithelium, outer plexiform layer, and the ganglion cell layer (at protein level). Brain. Expressed in the brainstem and cerebellum in a perineuronal net pattern.

The protein resides in the secreted. It localises to the extracellular space. It is found in the extracellular matrix. Functionally, may play a role in the terminally differentiating and the adult nervous system during postnatal development. Could stabilize interactions between hyaluronan (HA) and brain proteoglycans. This chain is Brevican core protein (Bcan), found in Mus musculus (Mouse).